The sequence spans 258 residues: Ubiquinone/menaquinone biosynthesis C-methyltransferase UbiE (258 aa).

Positions 1 to 21 (MPESRTSADGGMETSYGFREV) are disordered. S-adenosyl-L-methionine contacts are provided by residues Thr-81, Asp-102, and 130–131 (NA).

The protein belongs to the class I-like SAM-binding methyltransferase superfamily. MenG/UbiE family.

The enzyme catalyses a 2-demethylmenaquinol + S-adenosyl-L-methionine = a menaquinol + S-adenosyl-L-homocysteine + H(+). It carries out the reaction a 2-methoxy-6-(all-trans-polyprenyl)benzene-1,4-diol + S-adenosyl-L-methionine = a 5-methoxy-2-methyl-3-(all-trans-polyprenyl)benzene-1,4-diol + S-adenosyl-L-homocysteine + H(+). The protein operates within quinol/quinone metabolism; menaquinone biosynthesis; menaquinol from 1,4-dihydroxy-2-naphthoate: step 2/2. It functions in the pathway cofactor biosynthesis; ubiquinone biosynthesis. Functionally, methyltransferase required for the conversion of demethylmenaquinol (DMKH2) to menaquinol (MKH2) and the conversion of 2-polyprenyl-6-methoxy-1,4-benzoquinol (DDMQH2) to 2-polyprenyl-3-methyl-6-methoxy-1,4-benzoquinol (DMQH2). This chain is Ubiquinone/menaquinone biosynthesis C-methyltransferase UbiE, found in Rhizobium leguminosarum bv. trifolii (strain WSM2304).